The following is a 124-amino-acid chain: Large ribosomal subunit protein bL21 (124 aa).

The segment at 105–124 (TVKAEPKSKRAPAPEAAADA) is disordered. Over residues 115-124 (APAPEAAADA) the composition is skewed to low complexity.

Belongs to the bacterial ribosomal protein bL21 family. In terms of assembly, part of the 50S ribosomal subunit. Contacts protein L20.

In terms of biological role, this protein binds to 23S rRNA in the presence of protein L20. The chain is Large ribosomal subunit protein bL21 from Xanthobacter autotrophicus (strain ATCC BAA-1158 / Py2).